Consider the following 446-residue polypeptide: Probable glycine dehydrogenase (decarboxylating) subunit 1 (446 aa).

It belongs to the GcvP family. N-terminal subunit subfamily. In terms of assembly, the glycine cleavage system is composed of four proteins: P, T, L and H. In this organism, the P 'protein' is a heterodimer of two subunits.

It carries out the reaction N(6)-[(R)-lipoyl]-L-lysyl-[glycine-cleavage complex H protein] + glycine + H(+) = N(6)-[(R)-S(8)-aminomethyldihydrolipoyl]-L-lysyl-[glycine-cleavage complex H protein] + CO2. In terms of biological role, the glycine cleavage system catalyzes the degradation of glycine. The P protein binds the alpha-amino group of glycine through its pyridoxal phosphate cofactor; CO(2) is released and the remaining methylamine moiety is then transferred to the lipoamide cofactor of the H protein. This is Probable glycine dehydrogenase (decarboxylating) subunit 1 from Desulfitobacterium hafniense (strain DSM 10664 / DCB-2).